Here is a 181-residue protein sequence, read N- to C-terminus: NADH-quinone oxidoreductase subunit I (181 aa).

2 4Fe-4S ferredoxin-type domains span residues 52–81 and 91–120; these read TRDS…LKKS and EFFR…LISD. 8 residues coordinate [4Fe-4S] cluster: C61, C64, C67, C71, C100, C103, C106, and C110.

Belongs to the complex I 23 kDa subunit family. In terms of assembly, NDH-1 is composed of 13 different subunits. Subunits NuoA, H, J, K, L, M, N constitute the membrane sector of the complex. Requires [4Fe-4S] cluster as cofactor.

The protein resides in the cell inner membrane. It carries out the reaction a quinone + NADH + 5 H(+)(in) = a quinol + NAD(+) + 4 H(+)(out). Functionally, NDH-1 shuttles electrons from NADH, via FMN and iron-sulfur (Fe-S) centers, to quinones in the respiratory chain. The immediate electron acceptor for the enzyme in this species is believed to be ubiquinone. Couples the redox reaction to proton translocation (for every two electrons transferred, four hydrogen ions are translocated across the cytoplasmic membrane), and thus conserves the redox energy in a proton gradient. The polypeptide is NADH-quinone oxidoreductase subunit I (Blochmanniella floridana).